Consider the following 399-residue polypeptide: Enoyl-[acyl-carrier-protein] reductase [NADH] (399 aa).

Residues 48 to 53, 74 to 75, 111 to 112, and 139 to 140 contribute to the NAD(+) site; these read GASTGY, FE, DA, and LA. Y225 provides a ligand contact to substrate. Y235 functions as the Proton donor in the catalytic mechanism. NAD(+) contacts are provided by residues K244 and 274-276; that span reads VVT.

Belongs to the TER reductase family. Monomer.

It catalyses the reaction a 2,3-saturated acyl-[ACP] + NAD(+) = a (2E)-enoyl-[ACP] + NADH + H(+). It functions in the pathway lipid metabolism; fatty acid biosynthesis. Functionally, involved in the final reduction of the elongation cycle of fatty acid synthesis (FAS II). Catalyzes the reduction of a carbon-carbon double bond in an enoyl moiety that is covalently linked to an acyl carrier protein (ACP). This is Enoyl-[acyl-carrier-protein] reductase [NADH] from Yersinia pestis bv. Antiqua (strain Antiqua).